The sequence spans 101 residues: Putative pterin-4-alpha-carbinolamine dehydratase (101 aa).

The protein belongs to the pterin-4-alpha-carbinolamine dehydratase family.

It carries out the reaction (4aS,6R)-4a-hydroxy-L-erythro-5,6,7,8-tetrahydrobiopterin = (6R)-L-erythro-6,7-dihydrobiopterin + H2O. This Rhizobium johnstonii (strain DSM 114642 / LMG 32736 / 3841) (Rhizobium leguminosarum bv. viciae) protein is Putative pterin-4-alpha-carbinolamine dehydratase.